The sequence spans 374 residues: Protein RecA (374 aa).

Position 66-73 (66-73 (GPESSGKT)) interacts with ATP. The segment at 327–374 (LGVGVHPEESATEPGADAASAAPADAAPAVPAPTTAKATKSKAAAAKS) is disordered. The segment covering 338-374 (TEPGADAASAAPADAAPAVPAPTTAKATKSKAAAAKS) has biased composition (low complexity).

Belongs to the RecA family.

It localises to the cytoplasm. Functionally, can catalyze the hydrolysis of ATP in the presence of single-stranded DNA, the ATP-dependent uptake of single-stranded DNA by duplex DNA, and the ATP-dependent hybridization of homologous single-stranded DNAs. It interacts with LexA causing its activation and leading to its autocatalytic cleavage. The polypeptide is Protein RecA (Streptomyces lividans).